Here is a 42-residue protein sequence, read N- to C-terminus: Delta-actitoxin-Ael2d (42 aa).

Intrachain disulfides connect C4–C37, C6–C30, and C20–C38.

The protein belongs to the sea anemone type 3 (BDS) potassium channel toxin family.

The protein resides in the secreted. It is found in the nematocyst. Functionally, binds to voltage-gated sodium channels (Nav), and slows down the inactivation of mammalian Nav1.2/SCN2A, Nav1.3/SCN3A Nav1.4/SCN4A, Nav1.6/SCN8A, insect DmNav1 and BgNav1 channels, and arachnid VdNav1 channel. This toxin acts by binding to site 3 of sodium channels. This chain is Delta-actitoxin-Ael2d, found in Anthopleura elegantissima (Green aggregating anemone).